Reading from the N-terminus, the 468-residue chain is Argininosuccinate lyase (468 aa).

This sequence belongs to the lyase 1 family. Argininosuccinate lyase subfamily.

The protein localises to the cytoplasm. It carries out the reaction 2-(N(omega)-L-arginino)succinate = fumarate + L-arginine. The protein operates within amino-acid biosynthesis; L-arginine biosynthesis; L-arginine from L-ornithine and carbamoyl phosphate: step 3/3. The sequence is that of Argininosuccinate lyase from Hahella chejuensis (strain KCTC 2396).